Reading from the N-terminus, the 318-residue chain is Porphobilinogen deaminase (318 aa).

S-(dipyrrolylmethanemethyl)cysteine is present on cysteine 241.

Belongs to the HMBS family. In terms of assembly, monomer. Dipyrromethane is required as a cofactor.

The enzyme catalyses 4 porphobilinogen + H2O = hydroxymethylbilane + 4 NH4(+). Its pathway is porphyrin-containing compound metabolism; protoporphyrin-IX biosynthesis; coproporphyrinogen-III from 5-aminolevulinate: step 2/4. Its function is as follows. Tetrapolymerization of the monopyrrole PBG into the hydroxymethylbilane pre-uroporphyrinogen in several discrete steps. The chain is Porphobilinogen deaminase from Geobacter sulfurreducens (strain ATCC 51573 / DSM 12127 / PCA).